The primary structure comprises 328 residues: Transcription initiation factor IIB 4 (328 aa).

2 stretches are compositionally biased toward basic and acidic residues: residues 1–12 (MTNQRTTRDGSH) and 21–32 (RSRESTDEDHGC). A disordered region spans residues 1-47 (MTNQRTTRDGSHGTESVPTQRSRESTDEDHGCPECNGDLVTDEDRGE). The TFIIB-type zinc finger occupies 28-58 (EDHGCPECNGDLVTDEDRGETTCGECGLVVE). Residues Cys32, Cys35, Cys50, and Cys53 each contribute to the Zn(2+) site. Repeat copies occupy residues 144–227 (GEIE…AREL) and 238–319 (SYVP…EILD).

It belongs to the TFIIB family.

Its function is as follows. Stabilizes TBP binding to an archaeal box-A promoter. Also responsible for recruiting RNA polymerase II to the pre-initiation complex (DNA-TBP-TFIIB). The sequence is that of Transcription initiation factor IIB 4 from Halobacterium salinarum (strain ATCC 700922 / JCM 11081 / NRC-1) (Halobacterium halobium).